The sequence spans 355 residues: Spore germination protein XB (355 aa).

The next 10 membrane-spanning stretches (helical) occupy residues 2-24, 34-56, 69-91, 106-128, 135-157, 180-197, 210-232, 265-287, 299-321, and 326-348; these read VNFF…VIII, DSWI…VFIV, LMRN…YLII, FYLP…FYNI, IALT…MIAN, GMIY…ILFL, LIIV…IVEF, VYQW…PDVL, ISIL…SFYW, and VFLP…FVWV.

This sequence belongs to the amino acid-polyamine-organocation (APC) superfamily. Spore germination protein (SGP) (TC 2.A.3.9) family.

The protein localises to the cell membrane. Its function is as follows. May allow B.anthracis to germinate within phagocytic cells and therefore involved in virulence. The protein is Spore germination protein XB (gerXB) of Bacillus anthracis.